Consider the following 349-residue polypeptide: MTNQHSAPLTYRDAGVDIDAGDALVDRIKPLAARTMRPGVLAGIGGFGALFEVPKKFREPVLVSGTDGVGTKLRLAFDWNRHDTVGIDLVAMSVNDILVQGAEPLYFLDYFACGKLSVDTAAAVVGGIARGCELAGCALIGGETAEMPGMYPDGEYDLAGFAVGAVDKSAIIDGKSIQPGDVVLGLASSGAHSNGYSLVRKILERAGARPDQDFHGQPLVDVVMAPTRIYVKQVLAALDRHGPAIKGLAHITGGGLLDNVPRILQPGMAAQLQRDGWEMPKLFQWLQQQGSVADAEMHRVFNCGIGMVLVVAADQADAVAATLREQGEIVNRIGEIVPQQDGMAQTVVV.

Belongs to the AIR synthase family.

The protein resides in the cytoplasm. It carries out the reaction 2-formamido-N(1)-(5-O-phospho-beta-D-ribosyl)acetamidine + ATP = 5-amino-1-(5-phospho-beta-D-ribosyl)imidazole + ADP + phosphate + H(+). It functions in the pathway purine metabolism; IMP biosynthesis via de novo pathway; 5-amino-1-(5-phospho-D-ribosyl)imidazole from N(2)-formyl-N(1)-(5-phospho-D-ribosyl)glycinamide: step 2/2. The protein is Phosphoribosylformylglycinamidine cyclo-ligase of Bordetella pertussis (strain Tohama I / ATCC BAA-589 / NCTC 13251).